Here is a 400-residue protein sequence, read N- to C-terminus: S-adenosylmethionine synthase (400 aa).

Residue H15 coordinates ATP. A Mg(2+)-binding site is contributed by D17. K(+) is bound at residue E43. 2 residues coordinate L-methionine: E56 and Q99. Positions 99-109 (QSLEIGAGVDT) are flexible loop. Residues 174 to 176 (DGK), D254, 260 to 261 (RK), A277, and K281 contribute to the ATP site. D254 contributes to the L-methionine binding site. K285 is a binding site for L-methionine.

The protein belongs to the AdoMet synthase family. As to quaternary structure, homotetramer; dimer of dimers. Requires Mg(2+) as cofactor. K(+) serves as cofactor.

Its subcellular location is the cytoplasm. The catalysed reaction is L-methionine + ATP + H2O = S-adenosyl-L-methionine + phosphate + diphosphate. The protein operates within amino-acid biosynthesis; S-adenosyl-L-methionine biosynthesis; S-adenosyl-L-methionine from L-methionine: step 1/1. In terms of biological role, catalyzes the formation of S-adenosylmethionine (AdoMet) from methionine and ATP. The overall synthetic reaction is composed of two sequential steps, AdoMet formation and the subsequent tripolyphosphate hydrolysis which occurs prior to release of AdoMet from the enzyme. The polypeptide is S-adenosylmethionine synthase (Corynebacterium kroppenstedtii (strain DSM 44385 / JCM 11950 / CIP 105744 / CCUG 35717)).